Reading from the N-terminus, the 217-residue chain is N-(5'-phosphoribosyl)anthranilate isomerase (217 aa).

This sequence belongs to the TrpF family.

The enzyme catalyses N-(5-phospho-beta-D-ribosyl)anthranilate = 1-(2-carboxyphenylamino)-1-deoxy-D-ribulose 5-phosphate. It participates in amino-acid biosynthesis; L-tryptophan biosynthesis; L-tryptophan from chorismate: step 3/5. The sequence is that of N-(5'-phosphoribosyl)anthranilate isomerase from Chlorobium phaeobacteroides (strain BS1).